A 639-amino-acid chain; its full sequence is Chaperone protein DnaK (639 aa).

T198 carries the phosphothreonine; by autocatalysis modification. Positions 602–639 (QAKSQAQGGDNADAGKQANATADDVVDAEFEEVKDDKK) are disordered. The span at 625 to 639 (DVVDAEFEEVKDDKK) shows a compositional bias: acidic residues.

This sequence belongs to the heat shock protein 70 family.

Acts as a chaperone. The polypeptide is Chaperone protein DnaK (Shewanella baltica (strain OS155 / ATCC BAA-1091)).